A 209-amino-acid polypeptide reads, in one-letter code: Large ribosomal subunit protein uL3 (209 aa).

Residues 132 to 153 (ATHGNSLSHRVPGSIGQNQTPG) form a disordered region. N5-methylglutamine is present on Q150.

It belongs to the universal ribosomal protein uL3 family. In terms of assembly, part of the 50S ribosomal subunit. Forms a cluster with proteins L14 and L19. In terms of processing, methylated by PrmB.

Its function is as follows. One of the primary rRNA binding proteins, it binds directly near the 3'-end of the 23S rRNA, where it nucleates assembly of the 50S subunit. In Enterobacter sp. (strain 638), this protein is Large ribosomal subunit protein uL3.